Consider the following 422-residue polypeptide: 4-hydroxy-3-methylbut-2-en-1-yl diphosphate synthase (flavodoxin) (422 aa).

4 residues coordinate [4Fe-4S] cluster: C316, C319, C362, and E369.

Belongs to the IspG family. [4Fe-4S] cluster is required as a cofactor.

The catalysed reaction is (2E)-4-hydroxy-3-methylbut-2-enyl diphosphate + oxidized [flavodoxin] + H2O + 2 H(+) = 2-C-methyl-D-erythritol 2,4-cyclic diphosphate + reduced [flavodoxin]. The protein operates within isoprenoid biosynthesis; isopentenyl diphosphate biosynthesis via DXP pathway; isopentenyl diphosphate from 1-deoxy-D-xylulose 5-phosphate: step 5/6. Its function is as follows. Converts 2C-methyl-D-erythritol 2,4-cyclodiphosphate (ME-2,4cPP) into 1-hydroxy-2-methyl-2-(E)-butenyl 4-diphosphate. The polypeptide is 4-hydroxy-3-methylbut-2-en-1-yl diphosphate synthase (flavodoxin) (Anaplasma marginale (strain St. Maries)).